An 895-amino-acid polypeptide reads, in one-letter code: Alanine--tRNA ligase (895 aa).

Residues histidine 586, histidine 590, cysteine 690, and histidine 694 each coordinate Zn(2+).

The protein belongs to the class-II aminoacyl-tRNA synthetase family. Zn(2+) serves as cofactor.

The protein resides in the cytoplasm. The catalysed reaction is tRNA(Ala) + L-alanine + ATP = L-alanyl-tRNA(Ala) + AMP + diphosphate. Functionally, catalyzes the attachment of alanine to tRNA(Ala) in a two-step reaction: alanine is first activated by ATP to form Ala-AMP and then transferred to the acceptor end of tRNA(Ala). Also edits incorrectly charged Ser-tRNA(Ala) and Gly-tRNA(Ala) via its editing domain. The sequence is that of Alanine--tRNA ligase from Korarchaeum cryptofilum (strain OPF8).